A 521-amino-acid polypeptide reads, in one-letter code: GMP synthase [glutamine-hydrolyzing] (521 aa).

A Glutamine amidotransferase type-1 domain is found at Lys-5–Gly-197. The Nucleophile role is filled by Cys-81. Residues His-171 and Glu-173 contribute to the active site. Residues Trp-198 to Arg-390 form the GMPS ATP-PPase domain. Residue Ser-225–Ser-231 coordinates ATP.

In terms of assembly, homodimer.

It carries out the reaction XMP + L-glutamine + ATP + H2O = GMP + L-glutamate + AMP + diphosphate + 2 H(+). Its pathway is purine metabolism; GMP biosynthesis; GMP from XMP (L-Gln route): step 1/1. Its function is as follows. Catalyzes the synthesis of GMP from XMP. This is GMP synthase [glutamine-hydrolyzing] from Neisseria meningitidis serogroup C (strain 053442).